Reading from the N-terminus, the 48-residue chain is MNKQRFLFAAKISGIHFLLSLTVAALLAGLIFFVWYPFPYQKIMGSFK.

The protein is Fimbrial assembly protein, serogroup E2 (fimB) of Dichelobacter nodosus (Bacteroides nodosus).